A 254-amino-acid chain; its full sequence is Phosphoribosylaminoimidazole-succinocarboxamide synthase (254 aa).

It belongs to the SAICAR synthetase family.

The catalysed reaction is 5-amino-1-(5-phospho-D-ribosyl)imidazole-4-carboxylate + L-aspartate + ATP = (2S)-2-[5-amino-1-(5-phospho-beta-D-ribosyl)imidazole-4-carboxamido]succinate + ADP + phosphate + 2 H(+). It participates in purine metabolism; IMP biosynthesis via de novo pathway; 5-amino-1-(5-phospho-D-ribosyl)imidazole-4-carboxamide from 5-amino-1-(5-phospho-D-ribosyl)imidazole-4-carboxylate: step 1/2. The protein is Phosphoribosylaminoimidazole-succinocarboxamide synthase of Rhizobium meliloti (strain 1021) (Ensifer meliloti).